Reading from the N-terminus, the 653-residue chain is Beta-galactosidase-1-like protein 3 (653 aa).

Glutamate 227 acts as the Proton donor in catalysis. The Nucleophile role is filled by glutamate 301.

It belongs to the glycosyl hydrolase 35 family.

The chain is Beta-galactosidase-1-like protein 3 (GLB1L3) from Homo sapiens (Human).